A 350-amino-acid polypeptide reads, in one-letter code: MFNIASAPFAHNRKQTQTLMLLVILACLPGLLAQTWFFGWGSFIQILLALVTALGAEALVLRLRRRPIKPALMDGSAALTAVLIGLSLPPLLPWWMLVLGTAFAIIIAKHLYGGLGQNLFNPAMVAYVLLLVSFPVQMTSWLPPDTIRAYDIGFGDAASVIFTGFSLDGYSMAQLKQGVDGLTMATPLDTLKTGLNQGLTTGEVMSHAVFEGWGGIGWSWVNLGYLLGGLFLLQQKVINWRIPGAILGSLLLAATLGYLMTPDATATPMFHLFSGATMLGAFFIATDPVSASTTPRGRLVYGVLIGVLVYLIRRFGGYPDAFAFAVLLANLCVPLIDSLTRPKVYGARRK.

5 consecutive transmembrane segments (helical) span residues 15-35, 36-56, 67-87, 88-108, and 122-142; these read QTQT…LAQT, WFFG…ALGA, PIKP…IGLS, LPPL…IIIA, and PAMV…TSWL. Thr-186 is modified (FMN phosphoryl threonine). 4 helical membrane-spanning segments follow: residues 213 to 233, 242 to 262, 264 to 284, and 299 to 316; these read WGGI…LFLL, IPGA…LMTP, ATAT…AFFI, and LVYG…RRFG.

The protein belongs to the NqrB/RnfD family. As to quaternary structure, the complex is composed of six subunits: RnfA, RnfB, RnfC, RnfD, RnfE and RnfG. It depends on FMN as a cofactor.

Its subcellular location is the cell inner membrane. Functionally, part of a membrane-bound complex that couples electron transfer with translocation of ions across the membrane. The sequence is that of Ion-translocating oxidoreductase complex subunit D from Aeromonas salmonicida (strain A449).